The following is a 399-amino-acid chain: tRNA-specific 2-thiouridylase MnmA (399 aa).

ATP contacts are provided by residues alanine 18–serine 25 and leucine 44. Catalysis depends on cysteine 112, which acts as the Nucleophile. Cysteine 112 and cysteine 213 are oxidised to a cystine. Glycine 136 provides a ligand contact to ATP. Residues arginine 163–glutamine 165 are interaction with tRNA. Residue cysteine 213 is the Cysteine persulfide intermediate of the active site.

It belongs to the MnmA/TRMU family.

Its subcellular location is the cytoplasm. It catalyses the reaction S-sulfanyl-L-cysteinyl-[protein] + uridine(34) in tRNA + AH2 + ATP = 2-thiouridine(34) in tRNA + L-cysteinyl-[protein] + A + AMP + diphosphate + H(+). In terms of biological role, catalyzes the 2-thiolation of uridine at the wobble position (U34) of tRNA, leading to the formation of s(2)U34. In Rhizobium leguminosarum bv. trifolii (strain WSM2304), this protein is tRNA-specific 2-thiouridylase MnmA.